We begin with the raw amino-acid sequence, 47 residues long: uncharacterized protein (47 aa).

This is an uncharacterized protein from Saccharomyces cerevisiae (strain ATCC 204508 / S288c) (Baker's yeast).